The following is a 263-amino-acid chain: Acyl-[acyl-carrier-protein]--UDP-N-acetylglucosamine O-acyltransferase (263 aa).

The protein belongs to the transferase hexapeptide repeat family. LpxA subfamily. As to quaternary structure, homotrimer.

It is found in the cytoplasm. It catalyses the reaction a (3R)-hydroxyacyl-[ACP] + UDP-N-acetyl-alpha-D-glucosamine = a UDP-3-O-[(3R)-3-hydroxyacyl]-N-acetyl-alpha-D-glucosamine + holo-[ACP]. The protein operates within glycolipid biosynthesis; lipid IV(A) biosynthesis; lipid IV(A) from (3R)-3-hydroxytetradecanoyl-[acyl-carrier-protein] and UDP-N-acetyl-alpha-D-glucosamine: step 1/6. Its function is as follows. Involved in the biosynthesis of lipid A, a phosphorylated glycolipid that anchors the lipopolysaccharide to the outer membrane of the cell. The chain is Acyl-[acyl-carrier-protein]--UDP-N-acetylglucosamine O-acyltransferase from Xanthomonas campestris pv. campestris (strain 8004).